The following is a 585-amino-acid chain: Protein DENND6B (585 aa).

The region spanning 43–214 (ECVCVVTFDL…LPVMGVVVQV (172 aa)) is the uDENN domain. The cDENN domain occupies 246 to 373 (VHELDLFRCF…VKLKKPSRLK (128 aa)). The dDENN domain occupies 375–499 (LDTKPGLYTA…KSPHFDGWYR (125 aa)).

This sequence belongs to the DENND6 family.

The protein resides in the recycling endosome. It localises to the cytoplasm. Guanine nucleotide exchange factor (GEF) for RAB14. Also has some, lesser GEF activity towards RAB35. This is Protein DENND6B (DENND6B) from Homo sapiens (Human).